We begin with the raw amino-acid sequence, 411 residues long: MKIYLVGGAVRDQLLGYPHHEQDWVVVGATPQQMLDAGFKPVGKDFPVFLHPETQEEYALARQERKTAPGYTGFAFHADETVTLEQDLLRRDLTINAIAMDEEGTIIDPYNGKRDIETRTLRHVSQAFCEDPVRILRIARFAARYHHLGFRIAPETLALMRDMVQAGEVDHLVAERVWKELSRALEEQHPAIFIQTLRECGALHRLMPELNALFGIPQPEAHHPEVDTGVHALLALERACELSSTPEVRFAALIHDLGKGVTPKHLWPSHHGHEQDGVALVEQLCNRLSTPNQFRELAVAVCAYHTHCHRAFELNAKTLLKTLLALDGLRRPERFQQFCLCCQADAQGRTGLENRPYPQAAYFLQALEEIQKVDAKMFVAQGKKGAEIGEAMYSARLQKIKLLKTAQTPHE.

Gly-8 and Arg-11 together coordinate ATP. 2 residues coordinate CTP: Gly-8 and Arg-11. 2 residues coordinate Mg(2+): Glu-21 and Asp-23. ATP-binding residues include Arg-91, Arg-137, and Arg-140. Arg-91, Arg-137, and Arg-140 together coordinate CTP. In terms of domain architecture, HD spans 228-329 (TGVHALLALE…LKTLLALDGL (102 aa)).

The protein belongs to the tRNA nucleotidyltransferase/poly(A) polymerase family. Bacterial CCA-adding enzyme type 1 subfamily. In terms of assembly, monomer. Can also form homodimers and oligomers. It depends on Mg(2+) as a cofactor. The cofactor is Ni(2+).

It carries out the reaction a tRNA precursor + 2 CTP + ATP = a tRNA with a 3' CCA end + 3 diphosphate. The enzyme catalyses a tRNA with a 3' CCA end + 2 CTP + ATP = a tRNA with a 3' CCACCA end + 3 diphosphate. In terms of biological role, catalyzes the addition and repair of the essential 3'-terminal CCA sequence in tRNAs without using a nucleic acid template. Adds these three nucleotides in the order of C, C, and A to the tRNA nucleotide-73, using CTP and ATP as substrates and producing inorganic pyrophosphate. tRNA 3'-terminal CCA addition is required both for tRNA processing and repair. Also involved in tRNA surveillance by mediating tandem CCA addition to generate a CCACCA at the 3' terminus of unstable tRNAs. While stable tRNAs receive only 3'-terminal CCA, unstable tRNAs are marked with CCACCA and rapidly degraded. In Teredinibacter turnerae (strain ATCC 39867 / T7901), this protein is Multifunctional CCA protein.